A 516-amino-acid chain; its full sequence is Protein P54 (516 aa).

The N-terminal stretch at 1 to 27 (MKKSLLSAVMLSSIALTAVGSPIAAAA) is a signal peptide. The disordered stretch occupies residues 208–397 (ATAEDKKADL…PAPAPAPNPS (190 aa)). Basic and acidic residues predominate over residues 210–236 (AEDKKADLNRKKAEAEAEQARIREQAR). Composition is skewed to low complexity over residues 237 to 247 (LAEQARQQAAQ) and 257 to 380 (QAAA…TVTP). Positions 381–395 (APTPTPTPAPAPAPN) are enriched in pro residues. One can recognise a NlpC/P60 domain in the interval 399–516 (SVNGAAIVAE…WYTPDFAVSM (118 aa)). Cys429 (nucleophile) is an active-site residue. His480 acts as the Proton acceptor in catalysis. Residue His492 is part of the active site.

Belongs to the peptidase C40 family.

It is found in the secreted. The protein resides in the cell wall. The polypeptide is Protein P54 (Enterococcus faecium (Streptococcus faecium)).